Consider the following 507-residue polypeptide: E3 ubiquitin-protein ligase makorin-3 (507 aa).

Over residues 1 to 21 (MEEPAAPSEAHEAAGAQAGAE) the composition is skewed to low complexity. Disordered regions lie at residues 1–48 (MEEP…DSAL) and 69–89 (RGGL…PLPS). The C3H1-type 1 zinc-finger motif lies at 95–122 (WTKQIICRYYIHGQCKEGENCRYSHDLS). The interval 126–149 (MATEGGVSPPGASAGGGPSTAAHI) is disordered. Residues 238 to 265 (GSGLRFCYYASRGVCFRGESCMYLHGDI) form a C3H1-type 2 zinc finger. The interval 266-293 (CDMCGLQTLHPMDAAQREEHMRACIEAH) is makorin-type Cys-His. An RING-type zinc finger spans residues 311 to 365 (CGICMEVVYEKANPNDRRFGILSNCNHSFCIRCIRRWRSARQFENRIVKSCPQCR). The segment at 394–423 (AMSNKACRYFAEGRGNCPFGDTCFYKHEYP) adopts a C3H1-type 3 zinc-finger fold.

In terms of tissue distribution, ubiquitous.

Its subcellular location is the nucleus. The catalysed reaction is S-ubiquitinyl-[E2 ubiquitin-conjugating enzyme]-L-cysteine + [acceptor protein]-L-lysine = [E2 ubiquitin-conjugating enzyme]-L-cysteine + N(6)-ubiquitinyl-[acceptor protein]-L-lysine.. The protein operates within protein modification; protein ubiquitination. Functionally, E3 ubiquitin ligase catalyzing the covalent attachment of ubiquitin moieties onto substrate proteins. Acts as a key developmental timer that helps ensure puberty begins at the appropriate age, by inhibiting premature activation of the reproductive hormone cascade. Epigenetically regulates GNRH1 transcription by disrupting the binding of methyl-DNA binding protein 3/MBD3 to the promoter of GNRH1. Mechanistically, mediates the non-proteolytic ubiquitination of MBD3 at multiple sites with 'Lys27' ubiquitin linkages and thereby regulates the methylation status of the genome, including GNRH1 promoter. Modulates the stability and translation of GNRH1 mRNA by mediating the non-proteolytic ubiquitination of PABP family members PABPC1, PABPC3 and PABPC4 at multiple sites. Also participates in the maintenance of genomic and epigenomic stability by regulating the abundance of APEX2 via 'Lys-48'-linked ubiquitination. This Homo sapiens (Human) protein is E3 ubiquitin-protein ligase makorin-3 (MKRN3).